The sequence spans 200 residues: Large ribosomal subunit protein uL4c (200 aa).

The segment at 45–71 is disordered; sequence RAEIRGGGRKPWKQKGTGRARAGSRRS. Residues 51-68 show a composition bias toward basic residues; the sequence is GGRKPWKQKGTGRARAGS.

It belongs to the universal ribosomal protein uL4 family. Part of the 50S ribosomal subunit.

It is found in the plastid. The protein localises to the chloroplast. In terms of biological role, probably binds the 23S rRNA. The polypeptide is Large ribosomal subunit protein uL4c (rpl4) (Cyanidioschyzon merolae (strain NIES-3377 / 10D) (Unicellular red alga)).